Consider the following 154-residue polypeptide: GTP-dependent dephospho-CoA kinase (154 aa).

Residues aspartate 34, aspartate 53, and glutamate 107 each contribute to the GTP site.

The protein belongs to the GTP-dependent DPCK family.

The enzyme catalyses 3'-dephospho-CoA + GTP = GDP + CoA + H(+). It participates in cofactor biosynthesis; coenzyme A biosynthesis. Its function is as follows. Catalyzes the GTP-dependent phosphorylation of the 3'-hydroxyl group of dephosphocoenzyme A to form coenzyme A (CoA). The protein is GTP-dependent dephospho-CoA kinase of Nitrosopumilus maritimus (strain SCM1).